A 337-amino-acid chain; its full sequence is Glyceraldehyde-3-phosphate dehydrogenase 2 (337 aa).

NAD(+) contacts are provided by residues 11 to 12, aspartate 35, arginine 79, and threonine 121; that span reads RI. D-glyceraldehyde 3-phosphate-binding positions include 153–155, threonine 184, arginine 199, 212–213, and arginine 235; these read SCT and TG. Cysteine 154 serves as the catalytic Nucleophile. Residue asparagine 317 coordinates NAD(+).

This sequence belongs to the glyceraldehyde-3-phosphate dehydrogenase family. Homotetramer.

Its subcellular location is the cytoplasm. The catalysed reaction is D-glyceraldehyde 3-phosphate + phosphate + NADP(+) = (2R)-3-phospho-glyceroyl phosphate + NADPH + H(+). It catalyses the reaction D-glyceraldehyde 3-phosphate + phosphate + NAD(+) = (2R)-3-phospho-glyceroyl phosphate + NADH + H(+). Its pathway is carbohydrate degradation; glycolysis; pyruvate from D-glyceraldehyde 3-phosphate: step 1/5. Its function is as follows. Involved in photosynthetic carbon assimilation. Catalyzes the NAD(P)-dependent oxidative phosphorylation of glyceraldehyde 3-phosphate (G3P) to 1,3-bisphosphoglycerate (BPG). The first reaction step involves the formation of a hemiacetal intermediate between G3P and a cysteine residue, and this hemiacetal intermediate is then oxidized to a thioester, with concomitant reduction of NAD to NADH. The reduced NADH is then exchanged with the second NAD, and the thioester is attacked by a nucleophilic inorganic phosphate to produce BPG. It can use both NADP and NAD. The sequence is that of Glyceraldehyde-3-phosphate dehydrogenase 2 (gap2) from Synechocystis sp. (strain ATCC 27184 / PCC 6803 / Kazusa).